Here is an 816-residue protein sequence, read N- to C-terminus: Leucine--tRNA ligase (816 aa).

Residues 40 to 51 carry the 'HIGH' region motif; sequence SYPSGAQLHAGH. Positions 576–580 match the 'KMSKS' region motif; it reads KMSKS. Residue lysine 579 coordinates ATP.

It belongs to the class-I aminoacyl-tRNA synthetase family.

It localises to the cytoplasm. It catalyses the reaction tRNA(Leu) + L-leucine + ATP = L-leucyl-tRNA(Leu) + AMP + diphosphate. The polypeptide is Leucine--tRNA ligase (Clostridium beijerinckii (strain ATCC 51743 / NCIMB 8052) (Clostridium acetobutylicum)).